The primary structure comprises 461 residues: Fumarate hydratase class II (461 aa).

Substrate is bound by residues 97-99, Arg-125, 128-131, 138-140, and Thr-186; these read SGT, HPND, and SSN. His-187 functions as the Proton donor/acceptor in the catalytic mechanism. Ser-317 is an active-site residue. Substrate is bound by residues Ser-318 and 323-325; that span reads KVN.

It belongs to the class-II fumarase/aspartase family. Fumarase subfamily. As to quaternary structure, homotetramer.

Its subcellular location is the cytoplasm. The catalysed reaction is (S)-malate = fumarate + H2O. It functions in the pathway carbohydrate metabolism; tricarboxylic acid cycle; (S)-malate from fumarate: step 1/1. Its function is as follows. Involved in the TCA cycle. Catalyzes the stereospecific interconversion of fumarate to L-malate. In Ralstonia nicotianae (strain ATCC BAA-1114 / GMI1000) (Ralstonia solanacearum), this protein is Fumarate hydratase class II.